The primary structure comprises 195 residues: Imidazoleglycerol-phosphate dehydratase (195 aa).

Belongs to the imidazoleglycerol-phosphate dehydratase family.

The protein resides in the cytoplasm. It catalyses the reaction D-erythro-1-(imidazol-4-yl)glycerol 3-phosphate = 3-(imidazol-4-yl)-2-oxopropyl phosphate + H2O. It functions in the pathway amino-acid biosynthesis; L-histidine biosynthesis; L-histidine from 5-phospho-alpha-D-ribose 1-diphosphate: step 6/9. The polypeptide is Imidazoleglycerol-phosphate dehydratase (Methylorubrum extorquens (strain CM4 / NCIMB 13688) (Methylobacterium extorquens)).